Reading from the N-terminus, the 840-residue chain is Cytosolic carboxypeptidase 2 (840 aa).

The Peptidase M14 domain occupies 358-628 (YPYTYTDLQC…HVCDTLLDFC (271 aa)). Zn(2+)-binding residues include His-424, Glu-427, and His-520. Glu-592 acts as the Proton donor/acceptor in catalysis. The span at 706–719 (MFKKKKKKSLQTRK) shows a compositional bias: basic residues. Disordered regions lie at residues 706 to 726 (MFKK…EQYQ) and 758 to 789 (ESSS…LDPS).

Belongs to the peptidase M14 family. Interacts with RARRES1, KIF11 and MAPRE1. The cofactor is Zn(2+).

The protein resides in the cytoplasm. The protein localises to the cytosol. Its subcellular location is the cytoskeleton. It is found in the microtubule organizing center. It localises to the centrosome. The protein resides in the centriole. The protein localises to the cilium basal body. The enzyme catalyses (L-glutamyl)(n+1)-gamma-L-glutamyl-L-glutamyl-[protein] + H2O = (L-glutamyl)(n)-gamma-L-glutamyl-L-glutamyl-[protein] + L-glutamate. Its activity is regulated as follows. Inhibited by RARRES1. Its function is as follows. Metallocarboxypeptidase that mediates deglutamylation of tubulin and non-tubulin target proteins. Catalyzes the removal of polyglutamate side chains present on the gamma-carboxyl group of glutamate residues within the C-terminal tail of tubulin protein. Specifically cleaves tubulin long-side-chains, while it is not able to remove the branching point glutamate. Also catalyzes the removal of polyglutamate residues from the carboxy-terminus of non-tubulin proteins such as MYLK. The sequence is that of Cytosolic carboxypeptidase 2 (AGBL2) from Macaca fascicularis (Crab-eating macaque).